Here is a 90-residue protein sequence, read N- to C-terminus: Inactive casein kinase II subunit alpha-2 (90 aa).

ATP-binding positions include 40–48 (VGRGKYSEV) and lysine 63.

This sequence belongs to the protein kinase superfamily. Ser/Thr protein kinase family. CK2 subfamily.

Its function is as follows. The Nipponbare allele of HD6 contains a premature stop codon, resulting in a truncated non-functional product. The chain is Inactive casein kinase II subunit alpha-2 from Oryza sativa subsp. japonica (Rice).